The primary structure comprises 632 residues: DNA gyrase subunit B (632 aa).

Residues 419–533 form the Toprim domain; sequence RELFIVEGES…SGYLYIAQPP (115 aa). Glu425, Asp498, and Asp500 together coordinate Mg(2+).

This sequence belongs to the type II topoisomerase GyrB family. In terms of assembly, heterotetramer, composed of two GyrA and two GyrB chains. In the heterotetramer, GyrA contains the active site tyrosine that forms a transient covalent intermediate with DNA, while GyrB binds cofactors and catalyzes ATP hydrolysis. It depends on Mg(2+) as a cofactor. Mn(2+) is required as a cofactor. Ca(2+) serves as cofactor.

The protein resides in the cytoplasm. The enzyme catalyses ATP-dependent breakage, passage and rejoining of double-stranded DNA.. In terms of biological role, a type II topoisomerase that negatively supercoils closed circular double-stranded (ds) DNA in an ATP-dependent manner to modulate DNA topology and maintain chromosomes in an underwound state. Negative supercoiling favors strand separation, and DNA replication, transcription, recombination and repair, all of which involve strand separation. Also able to catalyze the interconversion of other topological isomers of dsDNA rings, including catenanes and knotted rings. Type II topoisomerases break and join 2 DNA strands simultaneously in an ATP-dependent manner. The sequence is that of DNA gyrase subunit B from Archaeoglobus fulgidus (strain ATCC 49558 / DSM 4304 / JCM 9628 / NBRC 100126 / VC-16).